The chain runs to 450 residues: Transcription factor SCREAM2 (450 aa).

3 disordered regions span residues 1 to 47 (MNSD…NQND), 207 to 231 (RQSSSSKMCNSESSSEMRKSSYERE), and 244 to 265 (GLNYESDDHNTNNNKGKKKGMP). The span at 209–220 (SSSSKMCNSESS) shows a compositional bias: low complexity. A compositionally biased stretch (basic and acidic residues) spans 221–230 (SEMRKSSYER). The bHLH domain occupies 263–312 (GMPAKNLMAERRRRKKLNDRLYMLRSVVPKISKMDRASILGDAIDYLKEL). Residues 378–450 (NIHMFCGRRP…LDTAGYAGLV (73 aa)) form the ACT domain.

As to quaternary structure, homodimer. Heterodimers with SPCH, MUTE, and FAMA. Expressed constitutively in roots, leaves, stems, and flowers. Broad expression within stomatal cell lineages of leaf epidermis, except in mature guard-cells.

It localises to the nucleus. Mediates stomatal differentiation in the epidermis probably by controlling successive roles of SPCH, MUTE, and FAMA. Functions as a dimer with SPCH during stomatal initiation. This Arabidopsis thaliana (Mouse-ear cress) protein is Transcription factor SCREAM2 (SCRM2).